The chain runs to 270 residues: Phospholysine phosphohistidine inorganic pyrophosphate phosphatase (270 aa).

Mg(2+) is bound by residues Asp-14 and Ser-16. Residues 14-16 (DVS), 52-53 (TN), and Lys-187 contribute to the substrate site. Asp-212 provides a ligand contact to Mg(2+).

This sequence belongs to the HAD-like hydrolase superfamily. It depends on Mg(2+) as a cofactor.

The protein resides in the cytoplasm. It localises to the nucleus. It carries out the reaction diphosphate + H2O = 2 phosphate + H(+). Its function is as follows. Phosphatase that hydrolyzes imidodiphosphate, 3-phosphohistidine and 6-phospholysine. Has broad substrate specificity and can also hydrolyze inorganic diphosphate, but with lower efficiency. This Xenopus laevis (African clawed frog) protein is Phospholysine phosphohistidine inorganic pyrophosphate phosphatase (lhpp).